A 396-amino-acid chain; its full sequence is Elongation factor Tu (396 aa).

Positions 10–206 (KPHCNIGTIG…AVDAYIPQPE (197 aa)) constitute a tr-type G domain. The segment at 19–26 (GHVDHGKT) is G1. 19–26 (GHVDHGKT) serves as a coordination point for GTP. Thr-26 serves as a coordination point for Mg(2+). Positions 60 to 64 (GITIS) are G2. The segment at 81 to 84 (DCPG) is G3. Residues 81–85 (DCPGH) and 136–139 (NKCD) each bind GTP. Residues 136-139 (NKCD) form a G4 region. Positions 174–176 (SAL) are G5.

The protein belongs to the TRAFAC class translation factor GTPase superfamily. Classic translation factor GTPase family. EF-Tu/EF-1A subfamily. Monomer.

The protein resides in the cytoplasm. The enzyme catalyses GTP + H2O = GDP + phosphate + H(+). GTP hydrolase that promotes the GTP-dependent binding of aminoacyl-tRNA to the A-site of ribosomes during protein biosynthesis. The polypeptide is Elongation factor Tu (Nitrobacter hamburgensis (strain DSM 10229 / NCIMB 13809 / X14)).